A 122-amino-acid polypeptide reads, in one-letter code: Large ribosomal subunit protein eL18 (122 aa).

Belongs to the eukaryotic ribosomal protein eL18 family.

The protein is Large ribosomal subunit protein eL18 of Picrophilus torridus (strain ATCC 700027 / DSM 9790 / JCM 10055 / NBRC 100828 / KAW 2/3).